The chain runs to 522 residues: Solute carrier family 2, facilitated glucose transporter member 2 (522 aa).

The Cytoplasmic portion of the chain corresponds to 1 to 10 (MSEDKITGTL). A helical transmembrane segment spans residues 11 to 31 (AFTVFTAVLGSFQFGYDIGVI). Over 32–96 (NAPQEVIISH…SAHIVTMLWS (65 aa)) the chain is Extracellular. Asparagine 62 carries N-linked (GlcNAc...) asparagine glycosylation. A helical membrane pass occupies residues 97-117 (LSVSSFAVGGMVASFFGGWLG). The Cytoplasmic segment spans residues 118–125 (DKLGRIKA). A helical transmembrane segment spans residues 126–146 (MLAANSLSLTGALLMGCSKFG). The Extracellular portion of the chain corresponds to 147–156 (PAHALIIAGR). Residues 157-177 (SVSGLYCGLISGLVPMYIGEI) form a helical membrane-spanning segment. Residues 178–185 (APTTLRGA) are Cytoplasmic-facing. The chain crosses the membrane as a helical span at residues 186 to 206 (LGTLHQLALVTGILISQIAGL). Glutamine 191 is a D-glucose binding site. The Extracellular segment spans residues 207-215 (SFILGNQDY). The helical transmembrane segment at 216–236 (WHILLGLSAVPALLQCLLLLF) threads the bilayer. The Cytoplasmic segment spans residues 237–301 (CPESPRYLYL…LFTDPNYRQP (65 aa)). The helical transmembrane segment at 302–322 (IVVALMLHLAQQFSGINGIFY) threads the bilayer. D-glucose contacts are provided by residues 312–313 (QQ) and asparagine 318. Residues 323–337 (YSTSIFQTAGISQPV) lie on the Extracellular side of the membrane. A helical membrane pass occupies residues 338–358 (YATIGVGAINMIFTAVSVLLV). Asparagine 347 contributes to the D-glucose binding site. The Cytoplasmic segment spans residues 359 to 365 (EKAGRRT). Residues 366–386 (LFLAGMIGMFFCAVFMSLGLV) traverse the membrane as a helical segment. At 387 to 401 (LLDKFTWMSYVSMTA) the chain is on the extracellular side. The helical transmembrane segment at 402–422 (IFLFVSFFEIGPGPIPWFMVA) threads the bilayer. Glutamate 410 and tryptophan 418 together coordinate D-glucose. Topologically, residues 423–431 (EFFSQGPRP) are cytoplasmic. Residues 432–452 (TALALAAFSNWVCNFIIALCF) traverse the membrane as a helical segment. Residues 453–459 (QYIADFL) lie on the Extracellular side of the membrane. A helical transmembrane segment spans residues 460–480 (GPYVFFLFAGVVLVFTLFTFF). The Cytoplasmic portion of the chain corresponds to 481–522 (KVPETKGKSFDEIAAEFRKKSGSAPPRKATVQMEFLGSSETV). A Phosphothreonine modification is found at threonine 521.

Belongs to the major facilitator superfamily. Sugar transporter (TC 2.A.1.1) family. Glucose transporter subfamily. Post-translationally, N-glycosylated; required for stability and retention at the cell surface of pancreatic beta cells. In terms of tissue distribution, present in liver, intestine, kidney and beta-pancreatic islet cells.

It is found in the cell membrane. The catalysed reaction is D-glucose(out) = D-glucose(in). It carries out the reaction D-fructose(out) = D-fructose(in). The enzyme catalyses L-dehydroascorbate(out) = L-dehydroascorbate(in). It catalyses the reaction D-galactose(in) = D-galactose(out). D-glucose and maltose competitively inhibit fructose transport. D-glucose, D-fructose and maltose inhibit deoxyglucose transport. Facilitative hexose transporter that mediates the transport of glucose, fructose and galactose. Likely mediates the bidirectional transfer of glucose across the plasma membrane of hepatocytes and is responsible for uptake of glucose by the beta cells; may comprise part of the glucose-sensing mechanism of the beta cell. May also participate with the Na(+)/glucose cotransporter in the transcellular transport of glucose in the small intestine and kidney. Also able to mediate the transport of dehydroascorbate. The chain is Solute carrier family 2, facilitated glucose transporter member 2 from Rattus norvegicus (Rat).